The primary structure comprises 449 residues: Amidophosphoribosyltransferase (449 aa).

The propeptide occupies 1-9 (MRGEIMKEK). Residue cysteine 10 is the Nucleophile of the active site. One can recognise a Glutamine amidotransferase type-2 domain in the interval 10-224 (CGIFGAYSQD…PGEVIVVKDG (215 aa)). Cysteine 239 provides a ligand contact to [4Fe-4S] cluster. Mg(2+) is bound by residues serine 286, aspartate 346, and aspartate 347. Positions 383, 432, and 435 each coordinate [4Fe-4S] cluster.

The protein in the C-terminal section; belongs to the purine/pyrimidine phosphoribosyltransferase family. The cofactor is Mg(2+). It depends on [4Fe-4S] cluster as a cofactor.

It catalyses the reaction 5-phospho-beta-D-ribosylamine + L-glutamate + diphosphate = 5-phospho-alpha-D-ribose 1-diphosphate + L-glutamine + H2O. It functions in the pathway purine metabolism; IMP biosynthesis via de novo pathway; N(1)-(5-phospho-D-ribosyl)glycinamide from 5-phospho-alpha-D-ribose 1-diphosphate: step 1/2. In terms of biological role, catalyzes the formation of phosphoribosylamine from phosphoribosylpyrophosphate (PRPP) and glutamine. In Pyrococcus horikoshii (strain ATCC 700860 / DSM 12428 / JCM 9974 / NBRC 100139 / OT-3), this protein is Amidophosphoribosyltransferase.